The chain runs to 377 residues: Membrane protein MLC1 (377 aa).

A compositionally biased stretch (basic and acidic residues) spans 1–23 (MTQEPFREELAYDRMPTLERGRQ). Positions 1 to 36 (MTQEPFREELAYDRMPTLERGRQDPASYAPDAKPSD) are disordered. Transmembrane regions (helical) follow at residues 52-72 (WVFS…SLYL), 82-100 (YLRC…SFTV), 111-131 (FQIL…WFGC), and 144-164 (FNLI…IIAA). Phosphoserine occurs at positions 177 and 179. A run of 4 helical transmembrane segments spans residues 199 to 219 (SVVE…ALNV), 230 to 250 (VTFF…HVAA), 257 to 277 (LVEV…TASG), and 304 to 324 (LLLL…GTAI).

As to quaternary structure, interacts with ATP1B1. Part of a complex containing ATP1B1, TRPV4, AQP4 and HEPACAM. In terms of tissue distribution, expressed in the brain, with highest levels found in the amygdala, nucleus caudatus, thalamus and hippocampus.

Its subcellular location is the membrane. The protein resides in the cell membrane. It localises to the cytoplasm. The protein localises to the perinuclear region. It is found in the endoplasmic reticulum. In terms of biological role, transmembrane protein mainly expressed in brain astrocytes that may play a role in transport across the blood-brain and brain-cerebrospinal fluid barriers. Regulates the response of astrocytes to hypo-osmosis by promoting calcium influx. May function as regulatory protein of membrane protein complexes such as ion channels. The polypeptide is Membrane protein MLC1 (Homo sapiens (Human)).